A 387-amino-acid chain; its full sequence is Carbamoyl phosphate synthase small chain (387 aa).

The CPSase stretch occupies residues 1–189 (MIKSAILVLE…GLPEDKQEQD (189 aa)). Residues Ser-47, Gly-241, and Gly-243 each coordinate L-glutamine. One can recognise a Glutamine amidotransferase type-1 domain in the interval 193–380 (HVVAYDFGAK…IELIEQYCQK (188 aa)). The active-site Nucleophile is Cys-269. Residues Leu-270, Gln-273, Asn-311, Gly-313, and Phe-314 each coordinate L-glutamine. Residues His-353 and Glu-355 contribute to the active site.

It belongs to the CarA family. As to quaternary structure, composed of two chains; the small (or glutamine) chain promotes the hydrolysis of glutamine to ammonia, which is used by the large (or ammonia) chain to synthesize carbamoyl phosphate. Tetramer of heterodimers (alpha,beta)4.

It carries out the reaction hydrogencarbonate + L-glutamine + 2 ATP + H2O = carbamoyl phosphate + L-glutamate + 2 ADP + phosphate + 2 H(+). The catalysed reaction is L-glutamine + H2O = L-glutamate + NH4(+). It functions in the pathway amino-acid biosynthesis; L-arginine biosynthesis; carbamoyl phosphate from bicarbonate: step 1/1. Its pathway is pyrimidine metabolism; UMP biosynthesis via de novo pathway; (S)-dihydroorotate from bicarbonate: step 1/3. In terms of biological role, small subunit of the glutamine-dependent carbamoyl phosphate synthetase (CPSase). CPSase catalyzes the formation of carbamoyl phosphate from the ammonia moiety of glutamine, carbonate, and phosphate donated by ATP, constituting the first step of 2 biosynthetic pathways, one leading to arginine and/or urea and the other to pyrimidine nucleotides. The small subunit (glutamine amidotransferase) binds and cleaves glutamine to supply the large subunit with the substrate ammonia. The chain is Carbamoyl phosphate synthase small chain from Photorhabdus laumondii subsp. laumondii (strain DSM 15139 / CIP 105565 / TT01) (Photorhabdus luminescens subsp. laumondii).